We begin with the raw amino-acid sequence, 153 residues long: Protein-export protein SecB (153 aa).

The protein belongs to the SecB family. In terms of assembly, homotetramer, a dimer of dimers. One homotetramer interacts with 1 SecA dimer.

Its subcellular location is the cytoplasm. One of the proteins required for the normal export of preproteins out of the cell cytoplasm. It is a molecular chaperone that binds to a subset of precursor proteins, maintaining them in a translocation-competent state. It also specifically binds to its receptor SecA. The protein is Protein-export protein SecB of Erwinia tasmaniensis (strain DSM 17950 / CFBP 7177 / CIP 109463 / NCPPB 4357 / Et1/99).